The primary structure comprises 65 residues: Large ribosomal subunit protein bL32 (65 aa).

This sequence belongs to the bacterial ribosomal protein bL32 family.

This chain is Large ribosomal subunit protein bL32, found in Phytoplasma australiense.